The chain runs to 438 residues: Xylose isomerase (438 aa).

Catalysis depends on residues His102 and Asp105. The Mg(2+) site is built by Glu233, Glu269, His272, Asp297, Asp308, Asp310, and Asp340.

The protein belongs to the xylose isomerase family. Homotetramer. Mg(2+) serves as cofactor.

It is found in the cytoplasm. It catalyses the reaction alpha-D-xylose = alpha-D-xylulofuranose. In Solibacter usitatus (strain Ellin6076), this protein is Xylose isomerase.